A 342-amino-acid chain; its full sequence is Galactose mutarotase (342 aa).

Position 2 is an N-acetylalanine (A2). At S14 the chain carries Phosphoserine. Beta-D-galactose is bound by residues N81–R82 and H107. Residue S124 is modified to Phosphoserine. Residue H176 is the Proton donor of the active site. Beta-D-galactose contacts are provided by residues H176–Y178, D243, Q279, and E307. The active-site Proton acceptor is the E307.

Belongs to the aldose epimerase family. In terms of assembly, monomer.

The protein resides in the cytoplasm. The catalysed reaction is alpha-D-galactose = beta-D-galactose. It catalyses the reaction alpha-D-glucose = beta-D-glucose. It functions in the pathway carbohydrate metabolism; hexose metabolism. Its pathway is carbohydrate metabolism; galactose metabolism. In terms of biological role, mutarotase that catalyzes the interconversion of beta-D-galactose and alpha-D-galactose during galactose metabolism. Beta-D-galactose is metabolized in the liver into glucose 1-phosphate, the primary metabolic fuel, by the action of four enzymes that constitute the Leloir pathway: GALM, GALK1 (galactokinase), GALT (galactose-1-phosphate uridylyltransferase) and GALE (UDP-galactose-4'-epimerase). Involved in the maintenance of the equilibrium between the beta- and alpha-anomers of galactose, therefore ensuring a sufficient supply of the alpha-anomer for GALK1. Also active on D-glucose although shows a preference for galactose over glucose. In Pongo abelii (Sumatran orangutan), this protein is Galactose mutarotase (GALM).